Consider the following 345-residue polypeptide: Phosphate acyltransferase (345 aa).

Belongs to the PlsX family. As to quaternary structure, homodimer. Probably interacts with PlsY.

It localises to the cytoplasm. The catalysed reaction is a fatty acyl-[ACP] + phosphate = an acyl phosphate + holo-[ACP]. It participates in lipid metabolism; phospholipid metabolism. In terms of biological role, catalyzes the reversible formation of acyl-phosphate (acyl-PO(4)) from acyl-[acyl-carrier-protein] (acyl-ACP). This enzyme utilizes acyl-ACP as fatty acyl donor, but not acyl-CoA. This chain is Phosphate acyltransferase, found in Thermodesulfovibrio yellowstonii (strain ATCC 51303 / DSM 11347 / YP87).